The following is a 171-amino-acid chain: Phosphinothricin N-acetyltransferase (171 aa).

In terms of domain architecture, N-acetyltransferase spans 7-171 (VQVRPGVEED…WDVAWYERPL (165 aa)). Acetyl-CoA contacts are provided by residues 94 to 96 (VYV), 102 to 107 (GRGIGS), and Asn-133.

This sequence belongs to the acetyltransferase family. PAT/BAR subfamily.

The enzyme catalyses phosphinothricin + acetyl-CoA = N-acetylphosphinothricin + CoA + H(+). Functionally, inactivates phosphinothricin (PPT) by transfer of an acetyl group from acetyl CoA. The physiological substrate could be a structurally related compound. The chain is Phosphinothricin N-acetyltransferase from Streptomyces coelicolor (strain ATCC BAA-471 / A3(2) / M145).